The following is a 659-amino-acid chain: Interferon-induced GTP-binding protein Mx3 (659 aa).

One can recognise a Dynamin-type G domain in the interval 65–338 (DLALPAIAVI…LISHICKSLP (274 aa)). Residues 75–82 (GDQSSGKS) are G1 motif. 75–82 (GDQSSGKS) is a binding site for GTP. The G2 motif stretch occupies residues 100-102 (VTR). The interval 176–179 (DLPG) is G3 motif. Residues 176-180 (DLPGI) and 245-248 (TKPD) contribute to the GTP site. Positions 245–248 (TKPD) are G4 motif. Positions 277–280 (KCRG) are G5 motif. Residues 547–568 (EAEEEERKHGKSRSAQSPNLQT) form a disordered region. Over residues 559 to 568 (RSAQSPNLQT) the composition is skewed to polar residues. One can recognise a GED domain in the interval 571-659 (MDEIFQHLNA…AQRRLAKFPG (89 aa)).

It belongs to the TRAFAC class dynamin-like GTPase superfamily. Dynamin/Fzo/YdjA family.

The protein resides in the cytoplasm. In terms of biological role, does not show activity against influenza virus or VSV; although it only differs from Mx2 by 8 positions. The sequence is that of Interferon-induced GTP-binding protein Mx3 (Mx3) from Rattus norvegicus (Rat).